A 123-amino-acid chain; its full sequence is Transmembrane protein 254 (123 aa).

At Ala2 the chain carries N-acetylalanine. Transmembrane regions (helical) follow at residues 15–35, 61–81, and 95–115; these read LFWFTVITLSFGYYTWVVFWP, LCNGYWLAWLIHVGESLYAIV, and LLWFLQTFFFGIASLTILIAY.

It is found in the membrane. This chain is Transmembrane protein 254 (TMEM254), found in Homo sapiens (Human).